Here is a 161-residue protein sequence, read N- to C-terminus: Ribosome maturation factor RimP (161 aa).

Belongs to the RimP family.

Its subcellular location is the cytoplasm. Functionally, required for maturation of 30S ribosomal subunits. The protein is Ribosome maturation factor RimP of Janthinobacterium sp. (strain Marseille) (Minibacterium massiliensis).